The primary structure comprises 255 residues: Acetyl-coenzyme A carboxylase carboxyl transferase subunit alpha (255 aa).

Residues 1–235 (MNIAKIVREA…KKELQTELAR (235 aa)) form the CoA carboxyltransferase C-terminal domain.

Belongs to the AccA family. As to quaternary structure, acetyl-CoA carboxylase is a heterohexamer composed of biotin carboxyl carrier protein (AccB), biotin carboxylase (AccC) and two subunits each of ACCase subunit alpha (AccA) and ACCase subunit beta (AccD).

Its subcellular location is the cytoplasm. The catalysed reaction is N(6)-carboxybiotinyl-L-lysyl-[protein] + acetyl-CoA = N(6)-biotinyl-L-lysyl-[protein] + malonyl-CoA. It participates in lipid metabolism; malonyl-CoA biosynthesis; malonyl-CoA from acetyl-CoA: step 1/1. In terms of biological role, component of the acetyl coenzyme A carboxylase (ACC) complex. First, biotin carboxylase catalyzes the carboxylation of biotin on its carrier protein (BCCP) and then the CO(2) group is transferred by the carboxyltransferase to acetyl-CoA to form malonyl-CoA. The polypeptide is Acetyl-coenzyme A carboxylase carboxyl transferase subunit alpha (Streptococcus pneumoniae serotype 19F (strain G54)).